Here is a 38-residue protein sequence, read N- to C-terminus: Large ribosomal subunit protein bL36 (38 aa).

This sequence belongs to the bacterial ribosomal protein bL36 family.

The polypeptide is Large ribosomal subunit protein bL36 (Lacticaseibacillus casei (strain BL23) (Lactobacillus casei)).